Reading from the N-terminus, the 418-residue chain is Glutamyl-tRNA reductase (418 aa).

Substrate is bound by residues 49–52 (TCNR), serine 109, 114–116 (EPQ), and glutamine 120. Residue cysteine 50 is the Nucleophile of the active site. Residue 189-194 (GAGETI) coordinates NADP(+).

This sequence belongs to the glutamyl-tRNA reductase family. In terms of assembly, homodimer.

It catalyses the reaction (S)-4-amino-5-oxopentanoate + tRNA(Glu) + NADP(+) = L-glutamyl-tRNA(Glu) + NADPH + H(+). It participates in porphyrin-containing compound metabolism; protoporphyrin-IX biosynthesis; 5-aminolevulinate from L-glutamyl-tRNA(Glu): step 1/2. In terms of biological role, catalyzes the NADPH-dependent reduction of glutamyl-tRNA(Glu) to glutamate 1-semialdehyde (GSA). This Salmonella choleraesuis (strain SC-B67) protein is Glutamyl-tRNA reductase.